A 339-amino-acid polypeptide reads, in one-letter code: Probable protein phosphatase 2C 28 (339 aa).

The 248-residue stretch at 87–334 folds into the PPM-type phosphatase domain; sequence DHGYHLVKGQ…DDISCVVVSF (248 aa). Aspartate 124, glycine 125, aspartate 286, and aspartate 325 together coordinate Mn(2+).

This sequence belongs to the PP2C family. Mg(2+) serves as cofactor. Mn(2+) is required as a cofactor.

The catalysed reaction is O-phospho-L-seryl-[protein] + H2O = L-seryl-[protein] + phosphate. It catalyses the reaction O-phospho-L-threonyl-[protein] + H2O = L-threonyl-[protein] + phosphate. The polypeptide is Probable protein phosphatase 2C 28 (Arabidopsis thaliana (Mouse-ear cress)).